The following is a 259-amino-acid chain: tRNA pseudouridine synthase A (259 aa).

Residue Asp52 is the Nucleophile of the active site. Tyr111 provides a ligand contact to substrate.

Belongs to the tRNA pseudouridine synthase TruA family. In terms of assembly, homodimer.

It carries out the reaction uridine(38/39/40) in tRNA = pseudouridine(38/39/40) in tRNA. Functionally, formation of pseudouridine at positions 38, 39 and 40 in the anticodon stem and loop of transfer RNAs. The chain is tRNA pseudouridine synthase A from Ruegeria sp. (strain TM1040) (Silicibacter sp.).